A 219-amino-acid chain; its full sequence is Thymidylate kinase (219 aa).

G9–T16 serves as a coordination point for ATP.

The protein belongs to the thymidylate kinase family.

The enzyme catalyses dTMP + ATP = dTDP + ADP. Its function is as follows. Phosphorylation of dTMP to form dTDP in both de novo and salvage pathways of dTTP synthesis. The polypeptide is Thymidylate kinase (Pelobacter propionicus (strain DSM 2379 / NBRC 103807 / OttBd1)).